A 72-amino-acid chain; its full sequence is DNA-directed RNA polymerase subunit omega (72 aa).

The protein belongs to the RNA polymerase subunit omega family. As to quaternary structure, the RNAP catalytic core consists of 2 alpha, 1 beta, 1 beta' and 1 omega subunit. When a sigma factor is associated with the core the holoenzyme is formed, which can initiate transcription.

The catalysed reaction is RNA(n) + a ribonucleoside 5'-triphosphate = RNA(n+1) + diphosphate. In terms of biological role, promotes RNA polymerase assembly. Latches the N- and C-terminal regions of the beta' subunit thereby facilitating its interaction with the beta and alpha subunits. The polypeptide is DNA-directed RNA polymerase subunit omega (Lactobacillus johnsonii (strain CNCM I-12250 / La1 / NCC 533)).